We begin with the raw amino-acid sequence, 118 residues long: Large ribosomal subunit protein bL20 (118 aa).

The protein belongs to the bacterial ribosomal protein bL20 family.

Its function is as follows. Binds directly to 23S ribosomal RNA and is necessary for the in vitro assembly process of the 50S ribosomal subunit. It is not involved in the protein synthesizing functions of that subunit. The protein is Large ribosomal subunit protein bL20 of Lactobacillus acidophilus (strain ATCC 700396 / NCK56 / N2 / NCFM).